The primary structure comprises 174 residues: MGAMRRMEAAKGAIISLLLDAYQKRNKIGMIAFRKDKAELILPFTSSVELGEKLLKDLPTGGKTPLADAFIKSYEVFDREIRKNPNIIPIMIVISDFKPNVAVKEDYVKEVFDACEKIAEKGINVILIDTEPQSFIKIGIGKEIANRFGFKYYKIEELSKDKILDICKSLEINF.

This is an uncharacterized protein from Methanocaldococcus jannaschii (strain ATCC 43067 / DSM 2661 / JAL-1 / JCM 10045 / NBRC 100440) (Methanococcus jannaschii).